Reading from the N-terminus, the 243-residue chain is MAAIAASEVLVDSAEEGSLAAAAELAAQKREQRLRKFRELHLMRNEARKLNHQEVVEEDKRLKLPANWEAKKARLEWELKEEEKKKECAARGEDYEKVKLLEISAEDAERWERKKKRKNPDLGFSDYAAAQLRQYHRLTKQIKPDMETYERLREKHGEEFFPTSNSLLHGTHVPSTEEIDRMVIDLEKQIEKRDKYSRRRPYNDDADIDYINERNAKFNKKAERFYGKYTAEIKQNLERGTAV.

N-acetylalanine is present on Ala2. A coiled-coil region spans residues 66–91; that stretch reads ANWEAKKARLEWELKEEEKKKECAAR. Glycyl lysine isopeptide (Lys-Gly) (interchain with G-Cter in SUMO2) cross-links involve residues Lys143 and Lys234.

It belongs to the SYF2 family. As to quaternary structure, identified in the spliceosome C complex. Interacts with CCNDBP1. Abundantly expressed in the heart, skeletal muscle and kidney. Expressed at lower level other tissues.

It localises to the nucleus. In terms of biological role, involved in pre-mRNA splicing as component of the spliceosome. In Homo sapiens (Human), this protein is Pre-mRNA-splicing factor SYF2 (SYF2).